A 490-amino-acid chain; its full sequence is Tandem C2 domains nuclear protein (490 aa).

5 positions are modified to phosphoserine: serine 83, serine 156, serine 168, serine 174, and serine 211. Residues 189-215 (HDSLSSVPSSSSSRKNSQGSNRSLDTI) are disordered. Positions 192 to 211 (LSSVPSSSSSRKNSQGSNRS) are enriched in low complexity. Threonine 214 and threonine 216 each carry phosphothreonine. Serine 218 carries the post-translational modification Phosphoserine. 2 C2 domains span residues 223–342 (DFGR…SLDI) and 344–471 (PPSK…NQWK). The Nuclear localization signal signature appears at 447–449 (RRK).

It is found in the nucleus. The protein is Tandem C2 domains nuclear protein (TC2N) of Homo sapiens (Human).